Consider the following 189-residue polypeptide: WASH complex subunit homolog 3 (189 aa).

Residues Met-35–Met-74 adopt a coiled-coil conformation. Disordered regions lie at residues Leu-76–Ser-101 and Ser-150–Asp-189. Basic and acidic residues predominate over residues Ser-150–Ser-165. The segment covering Pro-167–Asp-189 has biased composition (polar residues). Phosphothreonine is present on Thr-182.

The protein belongs to the CCDC53 family. In terms of assembly, probable component of the WASH complex. Component of the DHIC (ddl-1-containing hsf-1 inhibitory complex), which contains at least ddl-1, ddl-2, hsb-1 and hsf-1. Within the complex, interacts with ddl-2. Within the complex, interacts with hsb-1. Within the complex, interacts with hsf-1. Formation of the DHIC may be dependent upon the Insulin/IGF-1-like signaling (IIS) mediated pathway. Post-translationally, phosphorylated. Phosphorylation on Thr-182 may promote DHIC complex dissociation and consequently the activation of heat-shock transcription factor hsf-1. Phosphorylation is modulated by the Insulin/IGF-1-like signaling (IIS) mediated pathway. Expressed in pharynx, intestine, body wall muscles, vulva muscles, spermatheca, and several head and tail neurons.

Its function is as follows. Acts as a component of the WASH core complex that functions as a nucleation-promoting factor (NPF) at the surface of endosomes, where it recruits and activates the Arp2/3 complex to induce actin polymerization, playing a key role in the fission of tubules that serve as transport intermediates during endosome sorting. Acts as a component of the DHIC (ddl-1-containing hsf-1 inhibitory complex) which modulates lifespan by sequestering the heat-shock transcription factor hsf-1 to negatively regulate its binding to DNA and its transcriptional activity. The chain is WASH complex subunit homolog 3 (ddl-1) from Caenorhabditis elegans.